The chain runs to 89 residues: Small ribosomal subunit protein uS14 (89 aa).

The protein belongs to the universal ribosomal protein uS14 family. In terms of assembly, part of the 30S ribosomal subunit. Contacts proteins S3 and S10.

Binds 16S rRNA, required for the assembly of 30S particles and may also be responsible for determining the conformation of the 16S rRNA at the A site. This chain is Small ribosomal subunit protein uS14, found in Exiguobacterium sibiricum (strain DSM 17290 / CCUG 55495 / CIP 109462 / JCM 13490 / 255-15).